The primary structure comprises 789 residues: Zinc finger protein GLIS1 (789 aa).

2 stretches are compositionally biased toward basic and acidic residues: residues 1-16 (MHCEVAEALSDKRPKE) and 63-74 (RAHDLLRPRSPR). Disordered stretches follow at residues 1 to 29 (MHCEVAEALSDKRPKEAPGAPGQGRGPVS), 53 to 93 (LLPR…YGHS), and 278 to 304 (PPLPGDLGGPPKRSRPGPASSDGQEGS). Residues 80–92 (KTGSGKVNGSYGH) show a composition bias toward polar residues. Residues 366–391 (QACRWVDCCAAYEQQEELVRHIEKSH) form a C2H2-type 1 zinc finger. Residues 400 to 427 (FTCFWAGCVRRYKPFNARYKLLIHMRVH) form a C2H2-type 2; atypical zinc finger. 3 consecutive C2H2-type zinc fingers follow at residues 433-457 (NKCMFEGCSKAFSRLENLKIHLRSH), 463-487 (YLCQHPGCQKAFSNSSDRAKHQRTH), and 493-517 (YACQIPGCSKRYTDPSSLRKHVKAH). 2 disordered regions span residues 506–529 (DPSSLRKHVKAHSAKEQQVRKKLH) and 573–684 (VYPG…QGYQ). Residues 511–527 (RKHVKAHSAKEQQVRKK) carry the Bipartite nuclear localization signal motif. A compositionally biased stretch (low complexity) spans 648 to 658 (ASQSQSPGGQS).

This sequence belongs to the GLI C2H2-type zinc-finger protein family. Interacts with KLF4. Interacts with POU5F1 and/or POU5F1B. Interacts with SOX2. In the adult, expressed highly in placenta and kidney and at lower levels in the testis, brain, colon, brown fat tissue and thymus. During embryo development, expressed in the frontal nasal region, branchial arches, somites, vibrissal and hair follicles, limb buds, craniofacial regions, ventral part of the tail, intervertebral disks, teeth, eyes and kidney.

Its subcellular location is the nucleus. Functionally, acts both as a repressor and an ctivator of transcription. Binds to the consensus sequence 5'-GACCACCCAC-3'. By controlling the expression of genes involved in cell differentiation inhibits the lineage commitment of multipotent cells. Prevents, for instance, the differentiation of multipotent mesenchymal cells into adipocyte and osteoblast. The chain is Zinc finger protein GLIS1 from Mus musculus (Mouse).